We begin with the raw amino-acid sequence, 208 residues long: Putative thymidylate kinase (208 aa).

Residues 12 to 19 (GIDGTGTS) are defective ATP-binding.

The protein belongs to the thymidylate kinase family.

It catalyses the reaction dTMP + ATP = dTDP + ADP. The protein is Putative thymidylate kinase (tmk) of Treponema pallidum (strain Nichols).